A 322-amino-acid chain; its full sequence is Homeobox protein DBX1-B (322 aa).

A DNA-binding region (homeobox) is located at residues 179 to 238; it reads GMLRRAVFSDVQRKALEKMFQKQKYISKPDRKKLATKLGLKDSQVKIWFQNRRMKWRNSK. Disordered regions lie at residues 238 to 266 and 296 to 322; these read KERELLSSGGCREQTLPTKMNPNPDLSDV and DLHFKSPSISSKHSDFSESEDEEITVS. The span at 312–322 shows a compositional bias: acidic residues; it reads SESEDEEITVS.

It belongs to the H2.0 homeobox family.

Its subcellular location is the nucleus. This Danio rerio (Zebrafish) protein is Homeobox protein DBX1-B (dbx1b).